The chain runs to 882 residues: MEPTAGSEKESEGDTVTGECVNRIPVPRPPSIEEFTIVKPISRGAFGKVYLGQKGGKLYAVKVVKKADMINKNMTHQVQAERDALALSKSPFIVHLYYSLQSANNVYLVMEYLIGGDVKSLLHIYGYFDEEMAVKYISEVALALDYLHRHGIIHRDLKPDNMLISNEGHIKLTDFGLSKVTLNRDINMMDILTTPSMAKPRQDYSRTPGQVLSLISSLGFFTPVAEKNKDSANILSTHVSETSQLSQGLVCPMSVDHRDTTPYSSKLLNSCLETVAPNPGMPVKCLTSHLLQSRRRLATSSASSQSHTFVSSVESECHSSPRWEKDCQESDHALGYTVMSWNIIEKPSCTDSRDAIETKGFNKKDLELALSPIHNSSTIPETGRSCVNLAKKGFPGEVSWEARELDINNIHVATDTAQSGFHQSDQWAVDSGDATEEHLGKRGFKRNFELVDSSPCQNIIQHKKNCIEHKPRNAMSDGYINQRTGLTTEVQDLKLSVCGGQQSDCANKENMVNSFIDKPQTPEKSPVPMIAKNLLCELDEDCDKNNKRDLLSSSLLCSDDERASKSICMDSDSSFPGISVMESSLERQSLDPDKSIKESSFEESNIEDLLTVSPRWQENILPKGDENPAVQDSSQKMLAPSSKVLKTLTLSKRNAVAFRSFNSHINASNNSEPSKMSLTSLDGMDISCVYSGSYPMAITPNQKGTSYIPYQQTPNQVKSGTPYRTPKSVRRGAAPVDDGRILGTPDYLAPELLLGRAHGPAVDWWALGVCLFEFLTGIPPFNDETPQQVFQNILKRDIPWPEGEEKLSDNSQNAVEILLTIDNAKRAGMKELKRHHLFSDVDWENLQHQTMPFIPQPDDETDTSYFEARNNAQHLTISGFSL.

Met1 bears the N-acetylmethionine mark. In terms of domain architecture, Protein kinase spans Phe35–Phe838. Residues Ile41–Val49 and Lys62 contribute to the ATP site. The active-site Proton acceptor is the Asp156. Residues Thr207 and Thr222 each carry the phosphothreonine modification. A phosphoserine mark is found at Ser293, Ser371, and Ser454. Phosphothreonine is present on Thr521. Phosphoserine occurs at positions 554, 558, 633, 660, and 671. The tract at residues Thr713–Val736 is disordered. A Phosphothreonine modification is found at Thr725. The residue at position 728 (Ser728) is a Phosphoserine. Phosphothreonine; by CDK1 is present on Thr744. The region spanning Ser839–Leu882 is the AGC-kinase C-terminal domain. Ser878 and Ser881 each carry phosphoserine.

Belongs to the protein kinase superfamily. AGC Ser/Thr protein kinase family. Phosphorylation at Thr-744 by CDK1 during M phase activates its kinase activity. Maximum phosphorylation occurs in prometaphase.

It localises to the cytoplasm. The protein localises to the cytoskeleton. The protein resides in the microtubule organizing center. It is found in the centrosome. Its subcellular location is the nucleus. The catalysed reaction is L-seryl-[protein] + ATP = O-phospho-L-seryl-[protein] + ADP + H(+). The enzyme catalyses L-threonyl-[protein] + ATP = O-phospho-L-threonyl-[protein] + ADP + H(+). Functionally, serine/threonine kinase that plays a key role in M phase by acting as a regulator of mitosis entry and maintenance. Acts by promoting the inactivation of protein phosphatase 2A (PP2A) during M phase: does not directly inhibit PP2A but acts by mediating phosphorylation and subsequent activation of ARPP19 and ENSA at 'Ser-62' and 'Ser-67', respectively. ARPP19 and ENSA are phosphatase inhibitors that specifically inhibit the PPP2R2D (PR55-delta) subunit of PP2A. Inactivation of PP2A during M phase is essential to keep cyclin-B1-CDK1 activity high. Following DNA damage, it is also involved in checkpoint recovery by being inhibited. The polypeptide is Serine/threonine-protein kinase greatwall (MASTL) (Ailuropoda melanoleuca (Giant panda)).